Consider the following 553-residue polypeptide: Neutral amino acid transporter B(0) (553 aa).

M1 carries the N-acetylmethionine modification. Over 1-50 (MAVDPPKADPKGVAVDSSRRCPALGSREDQSAKAGGCCGSRDRVRRCIRA) the chain is Cytoplasmic. Residues 51-80 (NLLVLLTVAAVVAGVGLGLGVSAAGGADAL) form a helical membrane-spanning segment. Residues 81–93 (GPARLTRFAFPGE) are Extracellular-facing. A helical transmembrane segment spans residues 94–115 (LLLRLLKMIILPLVVCSLIGGA). At 116–129 (ASLDPSALGRVGAW) the chain is on the cytoplasmic side. Residues 130–152 (ALLFFLVTTLLASALGVGLALAL) traverse the membrane as a helical segment. The Extracellular segment spans residues 153–236 (KPGAAVTAIT…INSTMVQLLC (84 aa)). N165 and N228 each carry an N-linked (GlcNAc...) asparagine glycan. The helical transmembrane segment at 237–260 (EVEGMNILGLVVFAIVFGVALRKL) threads the bilayer. Over 261 to 269 (GPEGELLIR) the chain is Cytoplasmic. A helical membrane pass occupies residues 270–297 (FFNSFNDATMVLVSWIMWYAPVGILFLV). Topologically, residues 298–318 (ASKIVEMKDVRQLFISLGKYI) are extracellular. The chain crosses the membrane as a helical span at residues 319 to 340 (LCCLLGHAIHGLLVLPLIYFLF). At 341–345 (TRKNP) the chain is on the cytoplasmic side. An intramembrane region (discontinuously helical) is located at residues 346 to 376 (YRFLWGIMTPLATAFGTSSSSATLPLMMKCV). Residues 377–385 (EEKNGVAKH) are Cytoplasmic-facing. The helical transmembrane segment at 386–412 (ISRFILPIGATVNMDGAALFQCVAAVF) threads the bilayer. 3 residues coordinate Na(+): G394, T396, and N398. The Extracellular segment spans residues 413 to 425 (IAQLNGVSLDFVK). The segment at residues 426 to 459 (IITILVTATASSVGAAGIPAGGVLTLAIILEAVS) is an intramembrane region (discontinuously helical). The Extracellular portion of the chain corresponds to 460–472 (LPVKDISLILAVD). The helical transmembrane segment at 473–494 (WLVDRSCTVLNVEGDAFGAGLL) threads the bilayer. Positions 483 and 487 each coordinate Na(+). Over 495–553 (QSYVDRTKMPSSEPELIQVKNEVSLNPLPLATEEGNPLLKQYQGPTGDSSATFEKESVM) the chain is Cytoplasmic. A phosphoserine mark is found at S505, S506, S518, S543, and S551. The disordered stretch occupies residues 531–553 (PLLKQYQGPTGDSSATFEKESVM). Positions 537–546 (QGPTGDSSAT) are enriched in polar residues.

Belongs to the dicarboxylate/amino acid:cation symporter (DAACS) (TC 2.A.23) family. SLC1A5 subfamily. Homotrimer. In terms of tissue distribution, highly expressed in adipose tissue. Detected in lung, skeletal muscle, large intestine, kidney and testis. Expressed in lung, brain, kidney and neural retina (at protein level). Expressed in Mueller cells (at protein level).

It localises to the cell membrane. It is found in the melanosome. The catalysed reaction is L-glutamine(out) + L-serine(in) + Na(+)(out) = L-glutamine(in) + L-serine(out) + Na(+)(in). The enzyme catalyses L-glutamine(in) + L-serine(out) + Na(+)(out) = L-glutamine(out) + L-serine(in) + Na(+)(in). It carries out the reaction L-threonine(in) + L-glutamine(out) + Na(+)(out) = L-threonine(out) + L-glutamine(in) + Na(+)(in). It catalyses the reaction L-threonine(out) + L-glutamine(in) + Na(+)(out) = L-threonine(in) + L-glutamine(out) + Na(+)(in). The catalysed reaction is L-asparagine(in) + L-glutamine(out) + Na(+)(out) = L-asparagine(out) + L-glutamine(in) + Na(+)(in). The enzyme catalyses L-asparagine(out) + L-glutamine(in) + Na(+)(out) = L-asparagine(in) + L-glutamine(out) + Na(+)(in). It carries out the reaction L-glutamine(in) + L-alanine(out) + Na(+)(out) = L-glutamine(out) + L-alanine(in) + Na(+)(in). It catalyses the reaction L-valine(out) + L-glutamine(in) + Na(+)(out) = L-valine(in) + L-glutamine(out) + Na(+)(in). The catalysed reaction is L-glutamine(in) + L-methionine(out) + Na(+)(out) = L-glutamine(out) + L-methionine(in) + Na(+)(in). The enzyme catalyses L-glutamine(in) + L-glutamate(out) + Na(+)(out) + H(+)(out) = L-glutamine(out) + L-glutamate(in) + Na(+)(in) + H(+)(in). It carries out the reaction D-serine(in) + L-glutamine(out) + Na(+)(out) = D-serine(out) + L-glutamine(in) + Na(+)(in). It catalyses the reaction D-serine(in) + L-alanine(out) + Na(+)(out) = D-serine(out) + L-alanine(in) + Na(+)(in). The catalysed reaction is nitrate(in) = nitrate(out). The enzyme catalyses iodide(out) = iodide(in). It carries out the reaction thiocyanate(in) = thiocyanate(out). Down-regulated at acidic pH, with the exception of L-glutamate transport which is up-regulated instead. In terms of biological role, sodium-coupled antiporter of neutral amino acids. In a tri-substrate transport cycle, exchanges neutral amino acids between the extracellular and intracellular compartments, coupled to the inward cotransport of at least one sodium ion. The preferred substrate is the essential amino acid L-glutamine, a precursor for biosynthesis of proteins, nucleotides and amine sugars as well as an alternative fuel for mitochondrial oxidative phosphorylation. Exchanges L-glutamine with other neutral amino acids such as L-serine, L-threonine and L-asparagine in a bidirectional way. Provides L-glutamine to proliferating stem and activated cells driving the metabolic switch toward cell differentiation. The transport cycle is usually pH-independent, with the exception of L-glutamate. Transports extracellular L-glutamate coupled to the cotransport of one proton and one sodium ion in exchange for intracellular L-glutamine counter-ion. May provide for L-glutamate uptake in glial cells regulating glutamine/glutamate cycle in the nervous system. Can transport D-amino acids. Mediates D-serine release from the retinal glia potentially affecting NMDA receptor function in retinal neurons. Displays sodium- and amino acid-dependent but uncoupled channel-like anion conductance with a preference SCN(-) &gt;&gt; NO3(-) &gt; I(-) &gt; Cl(-). Through binding of the fusogenic protein syncytin-1/ERVW-1 may mediate trophoblasts syncytialization, the spontaneous fusion of their plasma membranes, an essential process in placental development. The polypeptide is Neutral amino acid transporter B(0) (Slc1a5) (Mus musculus (Mouse)).